A 135-amino-acid polypeptide reads, in one-letter code: S-protein homolog 7 (135 aa).

An N-terminal signal peptide occupies residues 1-20; it reads MNNLFVLVIIIVLSAGSNNG.

Belongs to the plant self-incompatibility (S1) protein family.

Its subcellular location is the secreted. The polypeptide is S-protein homolog 7 (Arabidopsis thaliana (Mouse-ear cress)).